The sequence spans 271 residues: Chymotrypsin BII (271 aa).

Positions 1-15 are cleaved as a signal peptide; that stretch reads MIGKLSLLLVCVAVA. A propeptide spans 16–45 (activation peptide); the sequence is SGNPAAGKPWHWKSPKPLVDPRIHVNATPR. The region spanning 46 to 268 is the Peptidase S1 domain; that stretch reads IVGGVEATPH…YLDWIEQKTG (223 aa). C71 and C87 are joined by a disulfide. Catalysis depends on charge relay system residues H86 and D132. 2 disulfide bridges follow: C196/C209 and C219/C245. S223 functions as the Charge relay system in the catalytic mechanism.

Belongs to the peptidase S1 family.

It is found in the secreted. The protein resides in the extracellular space. It carries out the reaction Preferential cleavage: Tyr-|-Xaa, Trp-|-Xaa, Phe-|-Xaa, Leu-|-Xaa.. Its function is as follows. Serine protease with chymotryptic and collagenolytic activities. The protein is Chymotrypsin BII of Penaeus vannamei (Whiteleg shrimp).